The primary structure comprises 819 residues: Leucine--tRNA ligase (819 aa).

The 'HIGH' region signature appears at 40 to 51; it reads PYPSGAGLHVGH. The 'KMSKS' region motif lies at 600 to 604; sequence KMSKS. ATP is bound at residue Lys603.

It belongs to the class-I aminoacyl-tRNA synthetase family.

It is found in the cytoplasm. The catalysed reaction is tRNA(Leu) + L-leucine + ATP = L-leucyl-tRNA(Leu) + AMP + diphosphate. The polypeptide is Leucine--tRNA ligase (Chlamydia trachomatis serovar A (strain ATCC VR-571B / DSM 19440 / HAR-13)).